Here is a 514-residue protein sequence, read N- to C-terminus: Peptide chain release factor 3 (514 aa).

Residues 8–268 (KKRRTFAIIS…TFLEFAPEPH (261 aa)) form the tr-type G domain. Residues 17-24 (SHPDAGKT), 85-89 (DTPGH), and 139-142 (NKLD) each bind GTP.

It belongs to the TRAFAC class translation factor GTPase superfamily. Classic translation factor GTPase family. PrfC subfamily.

Its subcellular location is the cytoplasm. Its function is as follows. Increases the formation of ribosomal termination complexes and stimulates activities of RF-1 and RF-2. It binds guanine nucleotides and has strong preference for UGA stop codons. It may interact directly with the ribosome. The stimulation of RF-1 and RF-2 is significantly reduced by GTP and GDP, but not by GMP. The chain is Peptide chain release factor 3 from Streptococcus pyogenes serotype M49 (strain NZ131).